The primary structure comprises 96 residues: Protein YddL (96 aa).

The N-terminal stretch at 1–21 is a signal peptide; that stretch reads MKLKIVAVVVTGLLAANVAHA.

The sequence is that of Protein YddL (yddL) from Escherichia coli (strain K12).